The sequence spans 360 residues: Phospho-N-acetylmuramoyl-pentapeptide-transferase (360 aa).

10 helical membrane passes run tyrosine 21 to glycine 41, threonine 73 to leucine 93, serine 94 to valine 114, tryptophan 132 to glycine 152, valine 168 to serine 188, glycine 199 to threonine 219, alanine 236 to phenylalanine 256, valine 263 to leucine 283, leucine 288 to valine 308, and valine 338 to lysine 358.

The protein belongs to the glycosyltransferase 4 family. MraY subfamily. The cofactor is Mg(2+).

It is found in the cell inner membrane. It catalyses the reaction UDP-N-acetyl-alpha-D-muramoyl-L-alanyl-gamma-D-glutamyl-meso-2,6-diaminopimeloyl-D-alanyl-D-alanine + di-trans,octa-cis-undecaprenyl phosphate = di-trans,octa-cis-undecaprenyl diphospho-N-acetyl-alpha-D-muramoyl-L-alanyl-D-glutamyl-meso-2,6-diaminopimeloyl-D-alanyl-D-alanine + UMP. The protein operates within cell wall biogenesis; peptidoglycan biosynthesis. Its function is as follows. Catalyzes the initial step of the lipid cycle reactions in the biosynthesis of the cell wall peptidoglycan: transfers peptidoglycan precursor phospho-MurNAc-pentapeptide from UDP-MurNAc-pentapeptide onto the lipid carrier undecaprenyl phosphate, yielding undecaprenyl-pyrophosphoryl-MurNAc-pentapeptide, known as lipid I. This is Phospho-N-acetylmuramoyl-pentapeptide-transferase from Vibrio vulnificus (strain YJ016).